The following is a 218-amino-acid chain: MGQKINPLGFRLGTTQSHHSLWFAQPKKYSEGLEEDKKIRDCIKNYVQKNIRISSGMEGIARIEIQKRIDLIQIIIYMGFPKLLIEDKPRRVEELRMNVQKELNCVNRKLNIAITRISNPYGDPNILAEFIAGQLKNRVSFRKAMKKAIELTEQANTKGIQVQIAGRIDGKEIARVEWIREGRVPLQTIEAKIDYCSYTVRTIYGVLGIKIWIFVDEA.

The 72-residue stretch at 47 to 118 folds into the KH type-2 domain; sequence VQKNIRISSG…KLNIAITRIS (72 aa).

This sequence belongs to the universal ribosomal protein uS3 family. In terms of assembly, part of the 30S ribosomal subunit.

It is found in the plastid. It localises to the chloroplast. In Barbarea verna (Land cress), this protein is Small ribosomal subunit protein uS3c (rps3).